A 114-amino-acid chain; its full sequence is Putative movement protein (114 aa).

A helical transmembrane segment spans residues 27 to 47 (LIGIILLVTVCLIVLWVCIML). A disordered region spans residues 79–114 (RTPFEATGPERERNWDARRQSTTVNPASQPNTGSVF). Residues 86 to 97 (GPERERNWDARR) show a composition bias toward basic and acidic residues. Over residues 98–114 (QSTTVNPASQPNTGSVF) the composition is skewed to polar residues.

Belongs to the nanovirus movement protein family.

Its subcellular location is the host cell membrane. Its function is as follows. May transport viral genome to neighboring plant cells directly through plasmosdesmata, without any budding. The movement protein allows efficient cell to cell propagation, by bypassing the host cell wall barrier. The chain is Putative movement protein (DNA-M) from Faba bean necrotic yellows virus (isolate Syrian SV292-88) (FBNYV).